The sequence spans 251 residues: Triosephosphate isomerase (251 aa).

9–11 (NWK) lines the substrate pocket. Residue His-95 is the Electrophile of the active site. Glu-167 (proton acceptor) is an active-site residue. Substrate contacts are provided by residues Gly-173, Ser-212, and 233–234 (GG).

It belongs to the triosephosphate isomerase family. In terms of assembly, homodimer.

Its subcellular location is the cytoplasm. The enzyme catalyses D-glyceraldehyde 3-phosphate = dihydroxyacetone phosphate. It participates in carbohydrate biosynthesis; gluconeogenesis. The protein operates within carbohydrate degradation; glycolysis; D-glyceraldehyde 3-phosphate from glycerone phosphate: step 1/1. Functionally, involved in the gluconeogenesis. Catalyzes stereospecifically the conversion of dihydroxyacetone phosphate (DHAP) to D-glyceraldehyde-3-phosphate (G3P). The sequence is that of Triosephosphate isomerase from Pseudomonas putida (strain GB-1).